Reading from the N-terminus, the 426-residue chain is Histidine--tRNA ligase (426 aa).

This sequence belongs to the class-II aminoacyl-tRNA synthetase family.

It localises to the cytoplasm. The catalysed reaction is tRNA(His) + L-histidine + ATP = L-histidyl-tRNA(His) + AMP + diphosphate + H(+). The sequence is that of Histidine--tRNA ligase from Saccharolobus islandicus (strain M.16.27) (Sulfolobus islandicus).